A 477-amino-acid chain; its full sequence is Oxidative stress-induced growth inhibitor 1 (477 aa).

Serine 12 carries the phosphoserine modification.

Belongs to the OKL38 family. Requires NADPH as cofactor. As to expression, ubiquitous. Highest expression in the ovary, testis, kidney, skeletal muscle and liver.

It is found in the midbody. Its function is as follows. Monooxygenase catalytic activity. Involved in regulation of cytokinesis; promotes RHOA activity, probably acting locally at the midbody in late cytokinesis. Monooxygenase activity is involved in stabilizing transient structures between daughter cells, termed intercellular bridges, before abscission. Regulates differentiation and proliferation through the regulation of cell death. This Homo sapiens (Human) protein is Oxidative stress-induced growth inhibitor 1.